We begin with the raw amino-acid sequence, 95 residues long: DNA-directed RNA polymerase subunit Rpo11 (95 aa).

It belongs to the archaeal Rpo11/eukaryotic RPB11/RPC19 RNA polymerase subunit family. Part of the RNA polymerase complex.

It localises to the cytoplasm. The catalysed reaction is RNA(n) + a ribonucleoside 5'-triphosphate = RNA(n+1) + diphosphate. Its function is as follows. DNA-dependent RNA polymerase (RNAP) catalyzes the transcription of DNA into RNA using the four ribonucleoside triphosphates as substrates. In Thermococcus onnurineus (strain NA1), this protein is DNA-directed RNA polymerase subunit Rpo11.